A 720-amino-acid polypeptide reads, in one-letter code: Receptor-like protein CLAVATA2 (720 aa).

A signal peptide spans 1–25; sequence MIKIADFTLFFFIFVFSPSLPLAQS. An N-cap region spans residues 26–92; the sequence is QLPDLDPQDK…LNLSSQIHPS (67 aa). The Extracellular portion of the chain corresponds to 26–686; the sequence is QLPDLDPQDK…QNELVEGPIS (661 aa). N-linked (GlcNAc...) asparagine glycosylation is found at N49, N62, N84, N108, N127, and N168. Residues C60 and C68 are joined by a disulfide bond. LRR repeat units lie at residues 96 to 122, 124 to 144, 146 to 168, 170 to 194, 195 to 217, 219 to 238, 239 to 263, 264 to 287, 288 to 311, 314 to 338, 339 to 362, 364 to 386, 388 to 410, 411 to 436, 438 to 458, 459 to 482, 484 to 506, 547 to 571, 573 to 594, 595 to 617, and 619 to 641; these read LSSLQSLDLSHNNFSGNIPSCFGSLRN, RTLNLSRNRFVGSIPATFVSL, ELREVVLSENRDLGGVVPHWFGN, SMNLERVDFSFCSFVGELPESLLYL, KSLKYLNLESNNMTGTLRDFQQP, VVLNLASNQFSGTLPCFYAS, RPSLSILNIAENSLVGGLPSCLGSL, KELSHLNLSFNGFNYEISPRLMFS, EKLVMLDLSHNGFSGRLPSRISET, KLGLVLLDLSHNSFSGDIPLRITEL, KSLQALRLSHNLLTGDIPARIGNL, YLQVIDLSHNALTGSIPLNIVGC, QLLALMISNNNLSGEIQPELDAL, DSLKILDISNNHISGEIPLTLAGLKS, EIVDISSNNLSGNLNEAITKW, SNLKYLSLARNKFSGTLPSWLFKF, KIQMIDYSSNRFSWFIPDDNLNS, LLSMVGIDLSDNLLHGEIPEALFRQ, NIEYLNLSYNFLEGQLPRLEKL, PRLKALDLSHNSLSGQVIGNISA, and PGLTLLNLSHNCFSGIITEKEGL. N206 carries an N-linked (GlcNAc...) asparagine glycan. N-linked (GlcNAc...) asparagine glycosylation occurs at N270. N361 carries an N-linked (GlcNAc...) asparagine glycan. N-linked (GlcNAc...) asparagine glycosylation is present at N398. N446 is a glycosylation site (N-linked (GlcNAc...) asparagine). A glycan (N-linked (GlcNAc...) asparagine) is linked at N505. N-linked (GlcNAc...) asparagine glycans are attached at residues N578, N614, and N625. The C-cap/acidic domain stretch occupies residues 649-682; that stretch reads AGNPELCVETPGSKCDPANIDASQEEIYQNELVE. The chain crosses the membrane as a helical span at residues 687-707; sequence IWIFCLSAFISFDFGVLGIFC. Over 708–720 the chain is Cytoplasmic; that stretch reads SARARSYILQTKA.

Belongs to the RLP family. Parts of a tetrameric complex made of two CLV2/CRN heterodimers that can interact with CLV3 and CLE peptides. CLV2/CRN heterodimer interacts with CLV1 homodimers. Interacts with CRN; this dimer can interact with BAM3. Interacts with CLE14. In terms of tissue distribution, mostly expressed in apices (e.g. shoot apical meristem and flower buds), and, to a lower extent, in flowers, leaves, seedlings and siliques. Also expressed in the inner tissues of the proximal root meristem. Expressed throughout the vascular cylinder of root tips.

It localises to the cell membrane. The protein localises to the endoplasmic reticulum membrane. Involved in the perception of CLV3 and CLV3-like (CLE) peptides, that act as extracellular signals regulating meristems maintenance. Required for the sensing of the root CLE peptides (e.g. CLE8, CLE9/CLE10, CLE11, CLE13, CLE14, CLE16, CLE17, CLE18, CLE20, CLE21, CLE25, CLE26, CLE40, CLE41/CLE44 and CLE45), which also involves CRN and leads to root growth regulation, mostly in the phloem and protophloem. Involved in controlling the stem cell population size in shoot and root apical meristems, and during organ development. Promotes the formation of CLV1 multimers. In complex with CRN, perceives secreted CLV3-like effector proteins from plant-parasitic cyst nematodes as ligand mimics of the plant CLE signaling pathway. This recognition is required for proper feeding structure (syncytium) development and ultimately successful nematode infection. CLE14 perception by CLV2/CRN complex triggers root meristem differentiation. The chain is Receptor-like protein CLAVATA2 from Arabidopsis thaliana (Mouse-ear cress).